The primary structure comprises 254 residues: Uracil-DNA glycosylase (254 aa).

The active-site Proton acceptor is the Asp-91.

This sequence belongs to the uracil-DNA glycosylase (UDG) superfamily. UNG family.

The protein resides in the host nucleus. The catalysed reaction is Hydrolyzes single-stranded DNA or mismatched double-stranded DNA and polynucleotides, releasing free uracil.. Excises uracil residues from the DNA which can arise as a result of misincorporation of dUMP residues by DNA polymerase or deamination of cytosines. Therefore may reduce deleterious uracil incorporation into the viral genome, particularly in terminally differentiated cells which lack DNA repair enzymes. The polypeptide is Uracil-DNA glycosylase (U81) (Homo sapiens (Human)).